The chain runs to 572 residues: DNA polymerase (572 aa).

The segment at 1 to 222 (MPRKMYSCDF…LGLDKEVRYA (222 aa)) is 3'-5' exonuclease and strand displacement activities. The interaction with the primer terminal protein stretch occupies residues 56-66 (YFHNLKFDGAF). Mg(2+)-binding residues include Asp142 and Asp166. Residues 223 to 226 (YRGG) are DNA-binding; Involved in the formation of a stable complex between TP and phi29 DNA polymerase. The initiation, polymerization and pyrophosphorolytic activities stretch occupies residues 227-572 (FTWLNDRFKE…VLVDDTFTIK (346 aa)). The Mg(2+) site is built by Asp246 and Val247. 5-methyl-UTP is bound by residues Tyr251, Lys368, and Lys380. Residues Asp453 and Asp455 each coordinate Mg(2+). Asp455 provides a ligand contact to 5-methyl-UTP.

It belongs to the DNA polymerase type-B family. In terms of assembly, interacts with the primer terminal protein; this interaction allows the initiation of TP-primed DNA replication at both viral DNA ends. Interacts with DNA. Mg(2+) is required as a cofactor.

It carries out the reaction DNA(n) + a 2'-deoxyribonucleoside 5'-triphosphate = DNA(n+1) + diphosphate. In terms of biological role, polymerase responsible for protein-primed viral DNA replication by strand displacement with high processivity and fidelity. To start replication, the DNA polymerase forms a heterodimer with a free primer terminal protein (TP), recognizes the replication origins at both 5' ends of the linear chromosome, and initiates replication using as primer the OH-group of Ser-232 of the TP. This polymerase possesses three enzymatic activities: DNA synthesis (polymerase), primer terminal protein (TP) deoxynucleotidylation, which is the formation of a covalent linkage (phosphoester) between the hydroxyl group of a specific serine residue in TP and 5'-dAMP, a reaction directed by the second T at the 3' end, and 3' to 5' exonuclease activity. Exonuclease activity has a proofreading purpose. The chain is DNA polymerase (2) from Bacillus subtilis (Bacteriophage PZA).